Here is a 252-residue protein sequence, read N- to C-terminus: Petrobactin import ATP-binding protein YclP (252 aa).

The ABC transporter domain maps to 2-236; sequence VEVRNVSKQY…SVLEEIYDMT (235 aa). Residue 34-41 coordinates ATP; that stretch reads GPNGAGKS.

Belongs to the ABC transporter superfamily. The complex is composed of two ATP-binding proteins (YclP), two transmembrane proteins (YclN and YclO) and a solute-binding protein (YclQ).

The protein localises to the cell membrane. It carries out the reaction a Fe(III)-siderophore(out) + ATP + H2O = a Fe(III)-siderophore(in) + ADP + phosphate + H(+). In terms of biological role, part of the ABC transporter complex YclNOPQ involved in uptake of ferric-petrobactin. Petrobactin is a photoreactive 3,4-catecholate siderophore produced by many members of the B.cereus group, including B.anthracis. Probably responsible for energy coupling to the transport system. The protein is Petrobactin import ATP-binding protein YclP (yclP) of Bacillus subtilis (strain 168).